The primary structure comprises 412 residues: Transcription factor IIIA (412 aa).

A C2H2-type 1; degenerate zinc finger spans residues 20 to 43 (YLCQYCGISRSKNYLITKHIQSHH). 3 consecutive C2H2-type zinc fingers follow at residues 66–88 (HTCQ…MQSH), 94–118 (FTCY…LLTH), and 123–148 (FKCP…KKYH). The interval 144 to 207 (VKKYHSNDNR…NGNGDSQPAE (64 aa)) is disordered. Over residues 148-188 (HSNDNRDKDNTGLGDGDKDNTCKGDDDKEKSGSGGCEKENE) the composition is skewed to basic and acidic residues. Lys185 participates in a covalent cross-link: Glycyl lysine isopeptide (Lys-Gly) (interchain with G-Cter in ubiquitin). The C2H2-type 5 zinc-finger motif lies at 215 to 239 (VVCKEIGCGKAFKYPSQLQKHQDSH). The segment at 247 to 272 (AFCSEPGCMKYFTNEECLKSHIRSCH) adopts a C2H2-type 6; degenerate zinc-finger fold. The segment at 275 to 296 (INCEICGSKHLKKNIKRHLRTH) adopts a C2H2-type 7; degenerate zinc-finger fold. The C2H2-type 8 zinc-finger motif lies at 305-330 (IKCEVEGCSSTFSKASNLQKHMKAVH). The C2H2-type 9; degenerate zinc finger occupies 336–362 (FVCGFPGCGMRFAYKHVRNKHENSGYH). A Nuclear localization signal motif is present at residues 384–391 (LKRKQVTA).

Protein product TFIIIA (44 kDa) is proteolytically cleaved into TFIIIA-C (34 kDa). Expressed in seedlings, flowers, siliques and seeds.

It is found in the nucleus. It localises to the nucleolus. In terms of biological role, essential protein. Isoform 1 is a transcription activator the binds both 5S rDNA and 5S rRNA and stimulates the transcription of 5S rRNA gene. Isoform 1 regulates 5S rRNA levels during development. In Arabidopsis thaliana (Mouse-ear cress), this protein is Transcription factor IIIA.